Here is a 226-residue protein sequence, read N- to C-terminus: Glutathione peroxidase 3 (226 aa).

The N-terminal stretch at 1-24 is a signal peptide; that stretch reads MARILRASCLLSLLLAGFVPPGRG. Selenocysteine 73 is an active-site residue. Residue selenocysteine 73 is a non-standard amino acid, selenocysteine.

It belongs to the glutathione peroxidase family. As to quaternary structure, homotetramer. In terms of tissue distribution, secreted in plasma.

It localises to the secreted. The enzyme catalyses 2 glutathione + H2O2 = glutathione disulfide + 2 H2O. The catalysed reaction is tert-butyl hydroperoxide + 2 glutathione = tert-butanol + glutathione disulfide + H2O. Protects cells and enzymes from oxidative damage, by catalyzing the reduction of hydrogen peroxide, lipid peroxides and organic hydroperoxide, by glutathione. This chain is Glutathione peroxidase 3, found in Mus musculus (Mouse).